A 509-amino-acid polypeptide reads, in one-letter code: Protein disulfide-isomerase (509 aa).

An N-terminal signal peptide occupies residues 1–18; the sequence is MLRRAVLCLALAVTAGWA. Residues 19–135 form the Thioredoxin 1 domain; that stretch reads WAAEEEDNVL…IVNWLKKRTG (117 aa). Active-site nucleophile residues include Cys54 and Cys57. A disulfide bridge connects residues Cys54 and Cys57. Residues Lys223 and Lys272 each carry the N6-succinyllysine modification. Phosphoserine occurs at positions 332 and 358. Positions 347–476 constitute a Thioredoxin 2 domain; sequence FLEGKIKPHL…FKKFLESGGQ (130 aa). Residues Cys398 and Cys401 each act as nucleophile in the active site. A disulfide bond links Cys398 and Cys401. The residue at position 428 (Ser428) is a Phosphoserine. Positions 471–509 are disordered; the sequence is LESGGQDGAGDEDGLEDLEEAEEPDLEEDDDQKAVRDEL. Residues 479 to 501 are compositionally biased toward acidic residues; sequence AGDEDGLEDLEEAEEPDLEEDDD. Positions 506–509 match the Prevents secretion from ER motif; that stretch reads RDEL.

Belongs to the protein disulfide isomerase family. As to quaternary structure, heterodimer; heterodimerizes with the protein microsomal triglyceride transfer MTTP. Homodimer. Monomers and homotetramers may also occur. Interacts with P4HA2, forming a heterotetramer consisting of 2 alpha subunits (P4HA2) and 2 beta (P4HB), where P4HB plays the role of a structural subunit; this tetramer catalyzes the formation of 4-hydroxyproline in collagen. Also constitutes the structural subunit of the microsomal triacylglycerol transfer protein MTTP in mammalian cells. Stabilizes both enzymes and retain them in the ER without contributing to the catalytic activity. Binds UBQLN1. Interacts with ERO1B. Interacts with ILDR2. Interacts with ERN1/IRE1A (via N-terminus); the interaction is enhanced by phosphorylation of P4HB by FAM20C in response to endoplasmic reticulum stress and results in attenuation of ERN1 activity. Phosphorylation of Ser-358 by FAM20C is induced by endoplasmic reticulum stress and results in a functional switch from oxidoreductase to molecular chaperone. It also promotes interaction with ERN1.

Its subcellular location is the endoplasmic reticulum. The protein localises to the endoplasmic reticulum lumen. The protein resides in the melanosome. It is found in the cell membrane. The enzyme catalyses Catalyzes the rearrangement of -S-S- bonds in proteins.. Its function is as follows. This multifunctional protein catalyzes the formation, breakage and rearrangement of disulfide bonds. At the cell surface, seems to act as a reductase that cleaves disulfide bonds of proteins attached to the cell. May therefore cause structural modifications of exofacial proteins. Inside the cell, seems to form/rearrange disulfide bonds of nascent proteins. At high concentrations and following phosphorylation by FAM20C, functions as a chaperone that inhibits aggregation of misfolded proteins. At low concentrations, facilitates aggregation (anti-chaperone activity). May be involved with other chaperones in the structural modification of the TG precursor in hormone biogenesis. Also acts as a structural subunit of various enzymes such as prolyl 4-hydroxylase and microsomal triacylglycerol transfer protein MTTP. Receptor for LGALS9; the interaction retains P4HB at the cell surface of Th2 T helper cells, increasing disulfide reductase activity at the plasma membrane, altering the plasma membrane redox state and enhancing cell migration. The protein is Protein disulfide-isomerase (P4HB) of Oryctolagus cuniculus (Rabbit).